The chain runs to 28 residues: Aspartate aminotransferase, mitochondrial (28 aa).

This sequence belongs to the class-I pyridoxal-phosphate-dependent aminotransferase family. As to quaternary structure, homodimer. Pyridoxal 5'-phosphate is required as a cofactor.

It localises to the mitochondrion matrix. The enzyme catalyses L-aspartate + 2-oxoglutarate = oxaloacetate + L-glutamate. In terms of biological role, plays a key role in amino acid metabolism. Important for metabolite exchange between mitochondria and cytosol. This is Aspartate aminotransferase, mitochondrial from Catharanthus roseus (Madagascar periwinkle).